We begin with the raw amino-acid sequence, 346 residues long: Ribonucleoside-diphosphate reductase subunit beta (346 aa).

Residues glutamate 89, glutamate 120, and histidine 123 each contribute to the Fe cation site. Tyrosine 129 is a catalytic residue. Fe cation-binding residues include glutamate 193, glutamate 227, and histidine 230.

It belongs to the ribonucleoside diphosphate reductase small chain family. In terms of assembly, tetramer of two alpha and two beta subunits. The cofactor is Fe cation.

It catalyses the reaction a 2'-deoxyribonucleoside 5'-diphosphate + [thioredoxin]-disulfide + H2O = a ribonucleoside 5'-diphosphate + [thioredoxin]-dithiol. Functionally, provides the precursors necessary for DNA synthesis. Catalyzes the biosynthesis of deoxyribonucleotides from the corresponding ribonucleotides. The chain is Ribonucleoside-diphosphate reductase subunit beta (nrdB) from Chlamydia muridarum (strain MoPn / Nigg).